The chain runs to 234 residues: 2,3-bisphosphoglycerate-dependent phosphoglycerate mutase (234 aa).

Residues 8-15 (RHGESVWN), 21-22 (TG), R60, 87-90 (ERHY), K98, 114-115 (RR), and 183-184 (GN) contribute to the substrate site. Catalysis depends on H9, which acts as the Tele-phosphohistidine intermediate. The active-site Proton donor/acceptor is the E87.

The protein belongs to the phosphoglycerate mutase family. BPG-dependent PGAM subfamily. As to quaternary structure, homodimer.

The enzyme catalyses (2R)-2-phosphoglycerate = (2R)-3-phosphoglycerate. It functions in the pathway carbohydrate degradation; glycolysis; pyruvate from D-glyceraldehyde 3-phosphate: step 3/5. Its function is as follows. Catalyzes the interconversion of 2-phosphoglycerate and 3-phosphoglycerate. This is 2,3-bisphosphoglycerate-dependent phosphoglycerate mutase from Citrifermentans bemidjiense (strain ATCC BAA-1014 / DSM 16622 / JCM 12645 / Bem) (Geobacter bemidjiensis).